Here is a 137-residue protein sequence, read N- to C-terminus: MQLQIHNTTRRKLDDALLCRAVETVIQGEGRHALEIAAVYCGSRMSRRINREYLQHDWPTDTISFPYGSGGNVEGEFYICLDVIEENARRFNTDFERELFRVTIHSVLHLAGYDDHLPEDRRRMTEREDSYLQQLFR.

Positions 105, 109, and 115 each coordinate Zn(2+).

This sequence belongs to the endoribonuclease YbeY family. It depends on Zn(2+) as a cofactor.

The protein localises to the cytoplasm. In terms of biological role, single strand-specific metallo-endoribonuclease involved in late-stage 70S ribosome quality control and in maturation of the 3' terminus of the 16S rRNA. This chain is Endoribonuclease YbeY, found in Chlorobium luteolum (strain DSM 273 / BCRC 81028 / 2530) (Pelodictyon luteolum).